We begin with the raw amino-acid sequence, 95 residues long: Nickel and cobalt resistance protein CnrY (95 aa).

The Cytoplasmic portion of the chain corresponds to 1-45 (MADVEEWLTHARKVTQEASIGVDVTSIQECISAEPAQRVLVARRD). The chain crosses the membrane as a helical span at residues 46–68 (AWRAICCAAFAALVAFAAINRVA). Over 69–95 (TIMLEKPAPTWVATPSAASPFGLLIGK) the chain is Periplasmic.

This sequence to A.xylosoxydans NccY.

The protein localises to the cell inner membrane. Functionally, nickel and cobalt resistance proteins CnrA, CnrB, CnrC CnrH and CnrR may be involved in the regulation of CNR. CnrH alone is able to activate cnr expression, and both CnrY and CrnX are needed for nickel induction of CnrH. In the absence of wild-type CnrY (due either to a frameshift, PubMed:10671463 or absence of the transcript, PubMed:10671464), nickel and cobalt resistance is constitutive, indicating that CrnY may act as a repressor or an anti-sigma factor. This chain is Nickel and cobalt resistance protein CnrY (cnrY), found in Cupriavidus metallidurans (strain ATCC 43123 / DSM 2839 / NBRC 102507 / CH34) (Ralstonia metallidurans).